The chain runs to 270 residues: Phosphonates import ATP-binding protein PhnC 1 (270 aa).

Residues 2 to 245 (LVVEGLTCRF…IARELYDLEA (244 aa)) form the ABC transporter domain. Residue 34–41 (GRSGAGKS) participates in ATP binding.

It belongs to the ABC transporter superfamily. Phosphonates importer (TC 3.A.1.9.1) family. As to quaternary structure, the complex is composed of two ATP-binding proteins (PhnC), two transmembrane proteins (PhnE) and a solute-binding protein (PhnD).

The protein resides in the cell inner membrane. It catalyses the reaction phosphonate(out) + ATP + H2O = phosphonate(in) + ADP + phosphate + H(+). In terms of biological role, part of the ABC transporter complex PhnCDE involved in phosphonates import. Responsible for energy coupling to the transport system. In Rhodopseudomonas palustris (strain ATCC BAA-98 / CGA009), this protein is Phosphonates import ATP-binding protein PhnC 1.